The sequence spans 750 residues: Polyribonucleotide nucleotidyltransferase (750 aa).

Mg(2+) contacts are provided by aspartate 519 and aspartate 525. A KH domain is found at 585 to 644 (PRVIAVKIPVDKIGEVIGPKGKMINQIQEDTGADISIEDDGTVYIGATNGPSADAARSAI). The S1 motif domain occupies 656–728 (GERYLGTVVK…DRGKLSLSPV (73 aa)). The segment at 725 to 750 (LSPVVAEEEGAASEDAPAEAAEESAE) is disordered. The span at 730 to 750 (AEEEGAASEDAPAEAAEESAE) shows a compositional bias: acidic residues.

It belongs to the polyribonucleotide nucleotidyltransferase family. Mg(2+) serves as cofactor.

The protein resides in the cytoplasm. It catalyses the reaction RNA(n+1) + phosphate = RNA(n) + a ribonucleoside 5'-diphosphate. Involved in mRNA degradation. Catalyzes the phosphorolysis of single-stranded polyribonucleotides processively in the 3'- to 5'-direction. In Paenarthrobacter aurescens (strain TC1), this protein is Polyribonucleotide nucleotidyltransferase.